Here is a 267-residue protein sequence, read N- to C-terminus: MTYFEAFFLALLQGFTEFLPISSSAHLILPSEVLGWSDQGLAFDVAVHVGTLAAVVMYFRKEVVTLLSAWTFSIVKKEHNKESKLAWLIILSTIPAAVCGLMFKDFIEVYLRSAWVIAITTIVFGLLLWWVDKNSTLVKDEYEMTWKKALFLGIAQAAAMIPGTSRSGITITAALYLGFTREAAARFSFLMSIPIITLAGSYLGLKLALSDAIIHFGFLGTGIIVSFISAYICIHFFLKLISSMGMTPFVIYRLLLGTSLLAWLALT.

8 helical membrane-spanning segments follow: residues 1–21 (MTYF…FLPI), 39–59 (QGLA…VMYF), 87–107 (WLII…KDFI), 111–131 (LRSA…LWWV), 149–169 (ALFL…RSGI), 189–209 (FLMS…KLAL), 218–238 (FLGT…HFFL), and 246–266 (MTPF…WLAL).

This sequence belongs to the UppP family.

It is found in the cell inner membrane. It carries out the reaction di-trans,octa-cis-undecaprenyl diphosphate + H2O = di-trans,octa-cis-undecaprenyl phosphate + phosphate + H(+). Catalyzes the dephosphorylation of undecaprenyl diphosphate (UPP). Confers resistance to bacitracin. The sequence is that of Undecaprenyl-diphosphatase from Aliivibrio salmonicida (strain LFI1238) (Vibrio salmonicida (strain LFI1238)).